A 612-amino-acid polypeptide reads, in one-letter code: MSPLLEVTDLAVTFRTDGDPVTAVRGISYRVEPGEVVAMVGESGSGKSAAAMAVVGLLPEYAQVRGSVRLQGTELLGLADNAMSRFRGKAIGTVFQDPMSALTPVYTVGDQIAEAIEVHQPRVGKKAARRRAVELLDLVGISQPQRRSRAFPHELSGGERQRVVIAIAIANDPDLLICDEPTTALDVTVQAQILDVLKAARDVTGAGVLIITHDLGVVAEFADRALVMYAGRVVESAGVNDLYRDRRMPYTVGLLGSVPRLDAAQGTRLVPIPGAPPSLAGLAPGCPFAPRCPLVIDECLTAEPELLDVATDHRAACIRTELVTGRSAADIYRVKTEARPAALGDASVVVRVRHLVKTYRLAKGVVLRRAIGEVRAVDGISLELRQGRTLGIVGESGSGKSTTLHEILELAAPQSGSIEVLGTDVATLGTAERRSLRRDIQVVFQDPVASLDPRLPVFDLIAEPLQANGFGKNETHARVAELLDIVGLRHGDASRYPAEFSGGQKQRIGIARALALQPKILALDEPVSALDVSIQAGIINLLLDLQEQFGLSYLFVSHDLSVVKHLAHQVAVMLAGTVVEQGDSEEVFGNPKHEYTRRLLGAVPQPDPARRG.

The 251-residue stretch at 5–255 (LEVTDLAVTF…RRMPYTVGLL (251 aa)) folds into the ABC transporter 1 domain. ATP is bound by residues Ser43, Gly44, Ser45, Gly46, Lys47, Ser48, Ala49, Tyr61, Gln96, Arg147, Gly158, Glu159, and His213. Positions 286, 292, 299, and 317 each coordinate [4Fe-4S] cluster. The region spanning 350-600 (VRVRHLVKTY…PKHEYTRRLL (251 aa)) is the ABC transporter 2 domain. Residues Ser396, Gly397, Ser398, Gly399, Lys400, Ser401, Thr402, Gln445, Arg495, Glu499, Gly503, and His558 each coordinate ATP.

The protein belongs to the ABC transporter superfamily. As to quaternary structure, the complex is composed of an ATP-binding protein (OppD), two transmembrane proteins (OppB and OppC) and a solute-binding protein (OppA).

The protein resides in the cell inner membrane. It carries out the reaction a [peptide](out) + ATP + H2O = a [peptide](in) + ADP + phosphate + H(+). Part of the ABC transporter complex OppABCD involved in the uptake of oligopeptides. Responsible for energy coupling to the transport system. This Mycobacterium bovis (strain ATCC BAA-935 / AF2122/97) protein is Oligopeptide transport ATP-binding protein OppD.